Consider the following 206-residue polypeptide: 2-phospho-L-lactate guanylyltransferase (206 aa).

It belongs to the CofC family. In terms of assembly, homodimer.

The enzyme catalyses (2S)-2-phospholactate + GTP + H(+) = (2S)-lactyl-2-diphospho-5'-guanosine + diphosphate. The protein operates within cofactor biosynthesis; coenzyme F420 biosynthesis. Its function is as follows. Guanylyltransferase that catalyzes the activation of (2S)-2-phospholactate (2-PL) as (2S)-lactyl-2-diphospho-5'-guanosine, via the condensation of 2-PL with GTP. It is involved in the biosynthesis of coenzyme F420, a hydride carrier cofactor. This chain is 2-phospho-L-lactate guanylyltransferase, found in Archaeoglobus fulgidus (strain ATCC 49558 / DSM 4304 / JCM 9628 / NBRC 100126 / VC-16).